Here is a 198-residue protein sequence, read N- to C-terminus: V-type ATP synthase subunit E (198 aa).

This sequence belongs to the V-ATPase E subunit family.

Functionally, produces ATP from ADP in the presence of a proton gradient across the membrane. The polypeptide is V-type ATP synthase subunit E (Clostridium perfringens (strain SM101 / Type A)).